Reading from the N-terminus, the 323-residue chain is tRNA U34 carboxymethyltransferase (323 aa).

Residues Lys91, Trp105, Lys110, Gly130, 152 to 154, 181 to 182, Met196, Tyr200, and Arg315 contribute to the carboxy-S-adenosyl-L-methionine site; these read DPT and IE.

This sequence belongs to the class I-like SAM-binding methyltransferase superfamily. CmoB family. Homotetramer.

The enzyme catalyses carboxy-S-adenosyl-L-methionine + 5-hydroxyuridine(34) in tRNA = 5-carboxymethoxyuridine(34) in tRNA + S-adenosyl-L-homocysteine + H(+). Catalyzes carboxymethyl transfer from carboxy-S-adenosyl-L-methionine (Cx-SAM) to 5-hydroxyuridine (ho5U) to form 5-carboxymethoxyuridine (cmo5U) at position 34 in tRNAs. The chain is tRNA U34 carboxymethyltransferase from Escherichia coli O81 (strain ED1a).